The sequence spans 992 residues: Vacuolar membrane protease (992 aa).

Topologically, residues 1 to 24 are cytoplasmic; sequence MSPAMANPRVRKFNPIAFTPLPVT. The helical transmembrane segment at 25–45 threads the bilayer; sequence FITTIVYLAVLILVLVTYLVV. The Vacuolar portion of the chain corresponds to 46–390; the sequence is PPAPTLEMSP…SAFAVFRLHT (345 aa). N-linked (GlcNAc...) asparagine glycans are attached at residues N59, N115, and N118. H174 and D186 together coordinate Zn(2+). Residue E220 is the Proton acceptor of the active site. A Zn(2+)-binding site is contributed by E221. A glycan (N-linked (GlcNAc...) asparagine) is linked at N237. Residues E246 and H319 each coordinate Zn(2+). The helical transmembrane segment at 391-411 threads the bilayer; it reads LFALSVTLLVIGPLVLFITSI. The Cytoplasmic segment spans residues 412–446; sequence ALSKTDRMYLFSMSKSLGGASETVSLRGLRGLFRT. The helical transmembrane segment at 447-467 threads the bilayer; it reads PIILTVTTVIPIGLAYLLEKI. Residues 468-474 lie on the Vacuolar side of the membrane; the sequence is NPYIVHS. A helical transmembrane segment spans residues 475-495; sequence SQFAVWSMMLSVWIFVAWFLA. The Cytoplasmic portion of the chain corresponds to 496 to 508; sequence RVADFFRPSALHR. The helical transmembrane segment at 509–529 threads the bilayer; sequence AYSYTWIFIVTWIMLVISTVY. At 530–533 the chain is on the vacuolar side; sequence ANQK. Residues 534-554 form a helical membrane-spanning segment; sequence GIAAGYFTFFYFAAVFLATWV. Residues 555–671 are Cytoplasmic-facing; the sequence is SYLELFSLPR…WSWTLPRWTW (117 aa). The disordered stretch occupies residues 579–620; it reads RSSSLSSRLLTPSADELPSDIGPNGAENVGDPDETDPTESTS. The helical transmembrane segment at 672 to 692 threads the bilayer; that stretch reads ILQLLLLAPIVIILVGQVGLL. The Vacuolar portion of the chain corresponds to 693 to 708; the sequence is LTTAMSQIGSDGVSTF. A helical membrane pass occupies residues 709–729; that stretch reads IVYLACALFSTLLFAPLLPFI. The Cytoplasmic segment spans residues 730-736; the sequence is HRFTYHV. A helical membrane pass occupies residues 737–757; that stretch reads PTFLLLIFIGTLIYNLVAFPF. At 758–992 the chain is on the vacuolar side; that stretch reads SPANRLKIFF…VEASHDFIIQ (235 aa). Residues N805, N846, and N954 are each glycosylated (N-linked (GlcNAc...) asparagine).

It belongs to the peptidase M28 family. It depends on Zn(2+) as a cofactor.

It is found in the vacuole membrane. In terms of biological role, may be involved in vacuolar sorting and osmoregulation. The protein is Vacuolar membrane protease of Paracoccidioides brasiliensis (strain Pb03).